Here is a 96-residue protein sequence, read N- to C-terminus: Myosuppressin (96 aa).

The N-terminal stretch at 1–24 is a signal peptide; that stretch reads MALGNGYYCAVVCVVLACASVVLC. Residues 25 to 80 constitute a propeptide that is removed on maturation; it reads APAQLCAGAADDDPRAARFCQALNTFLELYAEAAGEQVPEYQALVRDYPQLLDTGM. Residue glutamine 83 is modified to Pyrrolidone carboxylic acid; partial. Phenylalanine amide is present on phenylalanine 92. Residue arginine 96 is a propeptide.

It belongs to the myosuppressin family. In terms of tissue distribution, expressed in corpora cardiaca (CC), corpora allata (CA), antennal lobe (AL) and gnathal ganglion (GNG) (at protein level). In its non-pyroglutamate form, expression in GNG detected in all animals, in AL, CC and in CA in most animals (at protein level). In its pyroglutamate form, expression in CC, CA and GNG detected in all animals, in AL in some animals (at protein level).

Its subcellular location is the secreted. Functionally, myoinhibiting neuropeptide. The protein is Myosuppressin of Agrotis ipsilon (Black cutworm moth).